Here is a 289-residue protein sequence, read N- to C-terminus: Shikimate dehydrogenase (NADP(+)) (289 aa).

Residues 20 to 22 (SIS) and Ser67 contribute to the shikimate site. Lys71 (proton acceptor) is an active-site residue. Shikimate is bound by residues Asn92 and Asp107. Residues 132–136 (GGGGA) and Val230 contribute to the NADP(+) site. Position 232 (Tyr232) interacts with shikimate. Gly253 is a binding site for NADP(+).

It belongs to the shikimate dehydrogenase family. As to quaternary structure, homodimer.

The catalysed reaction is shikimate + NADP(+) = 3-dehydroshikimate + NADPH + H(+). Its pathway is metabolic intermediate biosynthesis; chorismate biosynthesis; chorismate from D-erythrose 4-phosphate and phosphoenolpyruvate: step 4/7. Involved in the biosynthesis of the chorismate, which leads to the biosynthesis of aromatic amino acids. Catalyzes the reversible NADPH linked reduction of 3-dehydroshikimate (DHSA) to yield shikimate (SA). This Streptococcus mutans serotype c (strain ATCC 700610 / UA159) protein is Shikimate dehydrogenase (NADP(+)).